We begin with the raw amino-acid sequence, 650 residues long: MSSQSLYKVSGNIAANALVNNEQYKTMYQESIVNPEGFWREHGKRIDWIKPYTKIKKTSFDDHNLSINWFYDGTLNASANCLDRHLSEHSDRVAIIWEGDNASEQRKITYGELHADVCKFANALRSQGVRRGDIVTIYMPMVPEAAVAMLACARIGAVHSVVFGGFSPDSIASRVIDGKSKVVITSDEGMRGGRAIPLKRNIDDALNHPDVTSVEKVIVLKRTGGKIDWVEGRDVWWHSLLETASEHCQPEEMGAEDPLFLLYTSGSTGNPKGVLHTTGGYMVYASMTHEYVFDYKAGEVYWCTADVGWITGHSYMVYGPLANGATVLIHEGVPNHPSPARLGEMIDRHKVNILYTAPTLIRALMAEGKQHFDQFDGSTLRIMGSVGEPINPEAWRWYHEVIGHEHCPIVDTWWQTETGGILITPLPGATDTKPGSATRPFFGVQPALVDNMGNILEGENEGNLVLLDSWPGQMRTVYGDHERFVLTYFKTFRGMYFTGDGARRDEDGYYWITGRVDDVINVSGHRLGTAEVESALVSHELVAEAAVVGYPHDIKGQGIYAYVTLTRGTEESEELRQELRQWVRKEIGALATPDLIQWASGLPKTRSGKIMRRFLRKIAANEVTNLGDASTLADPAVIETLIETRLNRTE.

CoA contacts are provided by residues 191–194 (RGGR), threonine 311, and asparagine 335. ATP contacts are provided by residues 387–389 (GEP), 411–416 (DTWWQT), aspartate 500, and arginine 515. Serine 523 contacts CoA. Arginine 526 contributes to the ATP binding site. Mg(2+) is bound by residues valine 537, histidine 539, and valine 542. Arginine 584 lines the CoA pocket. Position 609 is an N6-acetyllysine (lysine 609).

It belongs to the ATP-dependent AMP-binding enzyme family. Requires Mg(2+) as cofactor. Post-translationally, acetylated. Deacetylation by the SIR2-homolog deacetylase activates the enzyme.

The catalysed reaction is acetate + ATP + CoA = acetyl-CoA + AMP + diphosphate. Catalyzes the conversion of acetate into acetyl-CoA (AcCoA), an essential intermediate at the junction of anabolic and catabolic pathways. AcsA undergoes a two-step reaction. In the first half reaction, AcsA combines acetate with ATP to form acetyl-adenylate (AcAMP) intermediate. In the second half reaction, it can then transfer the acetyl group from AcAMP to the sulfhydryl group of CoA, forming the product AcCoA. The sequence is that of Acetyl-coenzyme A synthetase from Shewanella putrefaciens (strain CN-32 / ATCC BAA-453).